The primary structure comprises 211 residues: SAGA-associated factor 11 homolog (211 aa).

The segment at 115–136 (CTCPHCDRLVAAARFAPHLEKC) adopts an SGF11-type zinc-finger fold. Residues 153–211 (TKEGASASSSSTSTYIQSGGNTGGTDDEDDVDWSSDKRKKKSTQNSRNNGSKKNNGKIF) are disordered. A compositionally biased stretch (low complexity) spans 157-166 (ASASSSSTST). Position 187 is a phosphoserine (Ser187). The span at 197 to 211 (NSRNNGSKKNNGKIF) shows a compositional bias: low complexity.

Belongs to the SGF11 family. In terms of assembly, component of some SAGA transcription coactivator-HAT complexes, at least composed of Ada2b, not/nonstop, Pcaf/Gcn5, Sgf11 and Spt3. Within the SAGA complex, Sgf11, e(y)2, and not/nonstop form an additional subcomplex of SAGA called the DUB module (deubiquitination module). Interacts directly with not/nonstop. Interacts with the AMEX complex component xmas-2. Interacts with Cbp80; important for promoter recruitment of Sgf11 that is not associated with the DUB module.

The protein localises to the nucleus. It localises to the nucleoplasm. The protein resides in the cytoplasm. In terms of biological role, component of the transcription regulatory histone acetylation (HAT) complex SAGA, a multiprotein complex that activates transcription by remodeling chromatin and mediating histone acetylation and deubiquitination. Within the SAGA complex, participates in a subcomplex that specifically deubiquitinates histone H2B. The SAGA complex is recruited to specific gene promoters by activators, where it is required for transcription. Required for nuclear receptor-mediated transactivation. Binds independently on SAGA to promoters in an RNA-dependent manner. Binds to mRNA and is essential for total mRNA export from the nucleus. Required to counteract heterochromatin silencing. Controls the development of neuronal connectivity in visual system by being required for accurate axon targeting in the optic lobe. Required for expression of ecdysone-induced genes such as br/broad. This Drosophila mojavensis (Fruit fly) protein is SAGA-associated factor 11 homolog.